The following is a 116-amino-acid chain: Ribosome-binding factor A (116 aa).

This sequence belongs to the RbfA family. In terms of assembly, monomer. Binds 30S ribosomal subunits, but not 50S ribosomal subunits or 70S ribosomes.

It localises to the cytoplasm. In terms of biological role, one of several proteins that assist in the late maturation steps of the functional core of the 30S ribosomal subunit. Associates with free 30S ribosomal subunits (but not with 30S subunits that are part of 70S ribosomes or polysomes). Required for efficient processing of 16S rRNA. May interact with the 5'-terminal helix region of 16S rRNA. The chain is Ribosome-binding factor A from Streptococcus agalactiae.